The sequence spans 140 residues: Myrosinase 2 (140 aa).

The Nucleophile role is filled by arginine 70. Asparagine 114 and asparagine 127 each carry an N-linked (GlcNAc...) asparagine glycan.

The protein belongs to the glycosyl hydrolase 1 family. Homodimer.

It catalyses the reaction a thioglucoside + H2O = a sugar + a thiol.. Its activity is regulated as follows. Inhibited by ascorbate. In terms of biological role, degradation of glucosinolates (glucose residue linked by a thioglucoside bound to an amino acid derivative) to glucose, sulfate and any of the products: thiocyanates, isothiocyanates, nitriles, epithionitriles or oxazolidine-2-thiones. This chain is Myrosinase 2, found in Brevicoryne brassicae (Mealy cabbage aphid).